The primary structure comprises 693 residues: Triadin (693 aa).

At 1–47 (MTEITAEGNASTTTTVIDNKNGCIPKSPGKVLKRSVTEDIVTTFSSP) the chain is on the cytoplasmic side. Residues 48-68 (AAWLLVIALIITWSAVAIVMF) form a helical membrane-spanning segment. At 69-693 (DLVDYKNFSA…NSPGQKQQEQ (625 aa)) the chain is on the lumenal side. Residues 117-130 (EGDEDDEDADEDID) are compositionally biased toward acidic residues. Disordered regions lie at residues 117-260 (EGDE…AVHE), 278-649 (GDLK…QTRP), and 666-693 (FQFPVTPVQQPGENPGKTNSPGQKQQEQ). Composition is skewed to basic and acidic residues over residues 131 to 241 (KGEI…KETP) and 249 to 260 (KKDDKEMPAVHE). Ser-301 carries the post-translational modification Phosphoserine. Residues 305 to 352 (LEEKEKEEKKKMEKKDTSDTKKKEKEVKKKSEETTIDGKGKEPGKPPE) are compositionally biased toward basic and acidic residues. A compositionally biased stretch (polar residues) spans 354 to 364 (KQMTAKLTTQA). 2 stretches are compositionally biased toward basic and acidic residues: residues 366–427 (ARKD…KEEI) and 438–502 (GKKE…KEAK). A glycan (N-linked (GlcNAc...) asparagine) is linked at Asn-515. Composition is skewed to basic and acidic residues over residues 526 to 547 (VKPEKAEHQEKGHPSIKKDKPK) and 558 to 579 (DSGKKKIEKSEKESKVPTREEN). N-linked (GlcNAc...) asparagine glycosylation is present at Asn-584. Residues 587–637 (KAEKPGKIPKDSKEAPASKKDKEDSKEAPTSKKDKEDSKDVPHSKKDKEVT) are compositionally biased toward basic and acidic residues. Residues 672–693 (PVQQPGENPGKTNSPGQKQQEQ) show a composition bias toward polar residues.

Homooligomer of variable subunit number; disulfide-linked. Interacts with CASQ1 and RYR1 in skeletal muscle. Interacts with CASQ2. In terms of processing, phosphorylated by CaMK2. Post-translationally, N-glycosylated. As to expression, detected in heart (at protein level). Detected in heart.

It is found in the sarcoplasmic reticulum membrane. In terms of biological role, contributes to the regulation of lumenal Ca2+ release via the sarcoplasmic reticulum calcium release channels RYR1 and RYR2, a key step in triggering skeletal and heart muscle contraction. Required for normal organization of the triad junction, where T-tubules and the sarcoplasmic reticulum terminal cisternae are in close contact. Required for normal skeletal muscle strength. Plays a role in excitation-contraction coupling in the heart and in regulating the rate of heart beats. The sequence is that of Triadin from Mus musculus (Mouse).